The following is a 432-amino-acid chain: Serine hydroxymethyltransferase (432 aa).

Residues L131 and 135-137 contribute to the (6S)-5,6,7,8-tetrahydrofolate site; that span reads GHL. K240 carries the N6-(pyridoxal phosphate)lysine modification.

It belongs to the SHMT family. In terms of assembly, homodimer. It depends on pyridoxal 5'-phosphate as a cofactor.

It is found in the cytoplasm. It catalyses the reaction (6R)-5,10-methylene-5,6,7,8-tetrahydrofolate + glycine + H2O = (6S)-5,6,7,8-tetrahydrofolate + L-serine. It functions in the pathway one-carbon metabolism; tetrahydrofolate interconversion. The protein operates within amino-acid biosynthesis; glycine biosynthesis; glycine from L-serine: step 1/1. Its function is as follows. Catalyzes the reversible interconversion of serine and glycine with tetrahydrofolate (THF) serving as the one-carbon carrier. This reaction serves as the major source of one-carbon groups required for the biosynthesis of purines, thymidylate, methionine, and other important biomolecules. Also exhibits THF-independent aldolase activity toward beta-hydroxyamino acids, producing glycine and aldehydes, via a retro-aldol mechanism. This chain is Serine hydroxymethyltransferase, found in Bradyrhizobium diazoefficiens (strain JCM 10833 / BCRC 13528 / IAM 13628 / NBRC 14792 / USDA 110).